A 412-amino-acid polypeptide reads, in one-letter code: Serine hydroxymethyltransferase (412 aa).

Residues L120 and 124 to 126 (GHL) contribute to the (6S)-5,6,7,8-tetrahydrofolate site. K228 carries the N6-(pyridoxal phosphate)lysine modification. 353 to 355 (SPF) provides a ligand contact to (6S)-5,6,7,8-tetrahydrofolate.

It belongs to the SHMT family. Homodimer. Pyridoxal 5'-phosphate is required as a cofactor.

It is found in the cytoplasm. The catalysed reaction is (6R)-5,10-methylene-5,6,7,8-tetrahydrofolate + glycine + H2O = (6S)-5,6,7,8-tetrahydrofolate + L-serine. The protein operates within one-carbon metabolism; tetrahydrofolate interconversion. Its pathway is amino-acid biosynthesis; glycine biosynthesis; glycine from L-serine: step 1/1. Catalyzes the reversible interconversion of serine and glycine with tetrahydrofolate (THF) serving as the one-carbon carrier. This reaction serves as the major source of one-carbon groups required for the biosynthesis of purines, thymidylate, methionine, and other important biomolecules. Also exhibits THF-independent aldolase activity toward beta-hydroxyamino acids, producing glycine and aldehydes, via a retro-aldol mechanism. This chain is Serine hydroxymethyltransferase, found in Lachnoclostridium phytofermentans (strain ATCC 700394 / DSM 18823 / ISDg) (Clostridium phytofermentans).